We begin with the raw amino-acid sequence, 71 residues long: Pro-glucagon (71 aa).

The protein belongs to the glucagon family.

It is found in the secreted. Functionally, plays a key role in glucose metabolism and homeostasis. Regulates blood glucose by increasing gluconeogenesis and decreasing glycolysis. The sequence is that of Pro-glucagon (gcg) from Ictalurus punctatus (Channel catfish).